The primary structure comprises 78 residues: Translation initiation factor IF-1, chloroplastic (78 aa).

The S1-like domain occupies 1 to 72 (MKKQKLIDME…TKGRITYRFH (72 aa)).

The protein belongs to the IF-1 family. As to quaternary structure, component of the 30S ribosomal translation pre-initiation complex which assembles on the 30S ribosome in the order IF-2 and IF-3, IF-1 and N-formylmethionyl-tRNA(fMet); mRNA recruitment can occur at any time during PIC assembly.

It localises to the plastid. Its subcellular location is the chloroplast. In terms of biological role, one of the essential components for the initiation of protein synthesis. Stabilizes the binding of IF-2 and IF-3 on the 30S subunit to which N-formylmethionyl-tRNA(fMet) subsequently binds. Helps modulate mRNA selection, yielding the 30S pre-initiation complex (PIC). Upon addition of the 50S ribosomal subunit IF-1, IF-2 and IF-3 are released leaving the mature 70S translation initiation complex. The chain is Translation initiation factor IF-1, chloroplastic from Huperzia lucidula (Shining clubmoss).